The sequence spans 504 residues: Histidine ammonia-lyase (504 aa).

The 5-imidazolinone (Ala-Gly) cross-link spans 142-144 (ASG). Ser-143 is modified (2,3-didehydroalanine (Ser)).

The protein belongs to the PAL/histidase family. In terms of processing, contains an active site 4-methylidene-imidazol-5-one (MIO), which is formed autocatalytically by cyclization and dehydration of residues Ala-Ser-Gly.

It localises to the cytoplasm. It carries out the reaction L-histidine = trans-urocanate + NH4(+). Its pathway is amino-acid degradation; L-histidine degradation into L-glutamate; N-formimidoyl-L-glutamate from L-histidine: step 1/3. The protein is Histidine ammonia-lyase of Staphylococcus aureus (strain USA300).